The following is a 347-amino-acid chain: Haptoglobin (347 aa).

The first 18 residues, 1–18, serve as a signal peptide directing secretion; sequence MSDLGAVVALLLWGQLFA. In terms of domain architecture, Sushi spans 31–88; that stretch reads DGCPKPPMIANGYVEHLVRYQCKNYYRLRTEGDGVYTLNNEKQWTNKAVGDKLPECEA. Cystine bridges form between C52-C86 and C90-C207. The interval 103–347 is serine protease; that stretch reads ILGGHLDAKG…DWVQKTIAEN (245 aa). 5 N-linked (GlcNAc...) asparagine glycosylation sites follow: N125, N148, N152, N182, and N232. Cystine bridges form between C250–C281 and C292–C322. The tract at residues 259–264 is interaction with CD163; that stretch reads VPEKKT.

It belongs to the peptidase S1 family. Tetramer of two alpha and two beta chains; disulfide-linked. The hemoglobin/haptoglobin complex is composed of a haptoglobin dimer bound to two hemoglobin alpha-beta dimers. Interacts with CD163. Interacts with ERGIC3. As to expression, expressed by the liver and secreted in plasma.

The protein resides in the secreted. Functionally, as a result of hemolysis, hemoglobin is found to accumulate in the kidney and is secreted in the urine. Haptoglobin captures, and combines with free plasma hemoglobin to allow hepatic recycling of heme iron and to prevent kidney damage. Haptoglobin also acts as an antioxidant, has antibacterial activity and plays a role in modulating many aspects of the acute phase response. Hemoglobin/haptoglobin complexes are rapidly cleared by the macrophage CD163 scavenger receptor expressed on the surface of liver Kupfer cells through an endocytic lysosomal degradation pathway. In Papio hamadryas (Hamadryas baboon), this protein is Haptoglobin (HP).